A 113-amino-acid polypeptide reads, in one-letter code: Large ribosomal subunit protein uL22 (113 aa).

The protein belongs to the universal ribosomal protein uL22 family. Part of the 50S ribosomal subunit.

Functionally, this protein binds specifically to 23S rRNA; its binding is stimulated by other ribosomal proteins, e.g. L4, L17, and L20. It is important during the early stages of 50S assembly. It makes multiple contacts with different domains of the 23S rRNA in the assembled 50S subunit and ribosome. Its function is as follows. The globular domain of the protein is located near the polypeptide exit tunnel on the outside of the subunit, while an extended beta-hairpin is found that lines the wall of the exit tunnel in the center of the 70S ribosome. The polypeptide is Large ribosomal subunit protein uL22 (Bacillus mycoides (strain KBAB4) (Bacillus weihenstephanensis)).